Consider the following 89-residue polypeptide: Neuropeptide F (89 aa).

Positions 1-29 (MASGTFTQRLLVALMIFALIADLSTLVAA) are cleaved as a signal peptide. F61 is subject to Phenylalanine amide. Residues 65–89 (GGYLNPAIFGQDEQEVDWQDSTFSR) constitute a propeptide that is removed on maturation.

It belongs to the NPY family.

Its subcellular location is the secreted. An integral part of the sensory system that mediates food signaling, providing the neural basis for the regulation of food response; coordinates larval foraging and social behavior changes during development. May have a hormonal role in females. This is Neuropeptide F from Anopheles gambiae (African malaria mosquito).